A 137-amino-acid chain; its full sequence is Putative pumilio homolog 25 (137 aa).

Pumilio repeat units lie at residues 70–105 and 108–137; these read EFDS…LPHS and SVLV…TRLA.

Its subcellular location is the cytoplasm. In terms of biological role, sequence-specific RNA-binding protein that regulates translation and mRNA stability by binding the 3'-UTR of target mRNAs. This is Putative pumilio homolog 25 (APUM25) from Arabidopsis thaliana (Mouse-ear cress).